A 358-amino-acid chain; its full sequence is MTKRILFTGGGTVGHVTLNLILIPKFLKDGWEVHYIGDKKGIEYQEIQKSGYPVTFHAIKTGKLRRYFSWQNLIDVFKVATGLLQSLVIINKVKPQALFSKGGFVSVPPVIASRLMGVPVFVHESDLSMGLANKIALKFASTMYTTFESQVTNPIIKHIGAVTKVSKESGNYLPELSDIQNKFNPQLKTLLFIGGSAGAKVFNQLITNNPDLTKAFNVINITGDSQLNELSQNLYRVDYVTDLYQPLMQLADLVITRGGSNTLFELLAMQKLHLIVPLGKEASRGDQLENANYFEKQGYARQLSEELFNPETLISEVHYLLEHQDQFRKAMSESQEIKSPDVFYDLLKNDISLKAKGK.

UDP-N-acetyl-alpha-D-glucosamine is bound by residues Ser196 and Gln287.

This sequence belongs to the glycosyltransferase 28 family. MurG subfamily.

Its subcellular location is the cell membrane. The enzyme catalyses Mur2Ac(oyl-L-Ala-gamma-D-Glu-L-Lys-D-Ala-D-Ala)-di-trans,octa-cis-undecaprenyl diphosphate + UDP-N-acetyl-alpha-D-glucosamine = beta-D-GlcNAc-(1-&gt;4)-Mur2Ac(oyl-L-Ala-gamma-D-Glu-L-Lys-D-Ala-D-Ala)-di-trans,octa-cis-undecaprenyl diphosphate + UDP + H(+). Its pathway is cell wall biogenesis; peptidoglycan biosynthesis. In terms of biological role, cell wall formation. Catalyzes the transfer of a GlcNAc subunit on undecaprenyl-pyrophosphoryl-MurNAc-pentapeptide (lipid intermediate I) to form undecaprenyl-pyrophosphoryl-MurNAc-(pentapeptide)GlcNAc (lipid intermediate II). This chain is UDP-N-acetylglucosamine--N-acetylmuramyl-(pentapeptide) pyrophosphoryl-undecaprenol N-acetylglucosamine transferase, found in Streptococcus uberis (strain ATCC BAA-854 / 0140J).